A 97-amino-acid chain; its full sequence is DNA-directed RNA polymerase subunit omega (97 aa).

This sequence belongs to the RNA polymerase subunit omega family. As to quaternary structure, the RNAP catalytic core consists of 2 alpha, 1 beta, 1 beta' and 1 omega subunit. When a sigma factor is associated with the core the holoenzyme is formed, which can initiate transcription.

The enzyme catalyses RNA(n) + a ribonucleoside 5'-triphosphate = RNA(n+1) + diphosphate. Its function is as follows. Promotes RNA polymerase assembly. Latches the N- and C-terminal regions of the beta' subunit thereby facilitating its interaction with the beta and alpha subunits. The protein is DNA-directed RNA polymerase subunit omega of Coxiella burnetii (strain Dugway 5J108-111).